Consider the following 300-residue polypeptide: METQDHTLYVLLGPTGVGKTDLSLDIAERLGSPIISADSRQIFRELPIGTAAPTPEQRARVPHLFVGTHSVRDYYSAGMYEVEVLEALKELFRKYRGVLLTGGSMMYIDAVCRGIDDIPDPFPEVREELYARYAAEGLDGILAQLRLLDPDYYAKVDRRNYKRVIHGLEICLSTGRPFSSFHRHEAKERPFRIVKIGLYREREELCKRIDARVLEMMEQGLEEEARAVYPLRHLNALNTVGYKEMFEYFDGSIDRAEAVRRIQRNSRVYARKQMTWFRRDSTIRWFHPEADKGTVLTLVT.

13 to 20 (GPTGVGKT) lines the ATP pocket. 15–20 (TGVGKT) is a binding site for substrate. Residues 38-41 (DSRQ) form an interaction with substrate tRNA region.

It belongs to the IPP transferase family. Monomer. It depends on Mg(2+) as a cofactor.

It carries out the reaction adenosine(37) in tRNA + dimethylallyl diphosphate = N(6)-dimethylallyladenosine(37) in tRNA + diphosphate. Functionally, catalyzes the transfer of a dimethylallyl group onto the adenine at position 37 in tRNAs that read codons beginning with uridine, leading to the formation of N6-(dimethylallyl)adenosine (i(6)A). The protein is tRNA dimethylallyltransferase 2 of Porphyromonas gingivalis (strain ATCC 33277 / DSM 20709 / CIP 103683 / JCM 12257 / NCTC 11834 / 2561).